A 131-amino-acid chain; its full sequence is Small ribosomal subunit protein uS9 (131 aa).

Belongs to the universal ribosomal protein uS9 family.

The chain is Small ribosomal subunit protein uS9 from Glaesserella parasuis serovar 5 (strain SH0165) (Haemophilus parasuis).